The sequence spans 566 residues: Glucose-6-phosphate isomerase (566 aa).

Glu-374 serves as the catalytic Proton donor. Residues His-405 and Lys-529 contribute to the active site.

Belongs to the GPI family.

It localises to the cytoplasm. The catalysed reaction is alpha-D-glucose 6-phosphate = beta-D-fructose 6-phosphate. Its pathway is carbohydrate biosynthesis; gluconeogenesis. It functions in the pathway carbohydrate degradation; glycolysis; D-glyceraldehyde 3-phosphate and glycerone phosphate from D-glucose: step 2/4. In terms of biological role, catalyzes the reversible isomerization of glucose-6-phosphate to fructose-6-phosphate. The polypeptide is Glucose-6-phosphate isomerase (Bifidobacterium longum (strain NCC 2705)).